Here is a 174-residue protein sequence, read N- to C-terminus: 3-hydroxydecanoyl-[acyl-carrier-protein] dehydratase (174 aa).

His73 is a catalytic residue.

This sequence belongs to the thioester dehydratase family. FabA subfamily. Homodimer.

The protein localises to the cytoplasm. The catalysed reaction is a (3R)-hydroxyacyl-[ACP] = a (2E)-enoyl-[ACP] + H2O. It carries out the reaction (3R)-hydroxydecanoyl-[ACP] = (2E)-decenoyl-[ACP] + H2O. The enzyme catalyses (2E)-decenoyl-[ACP] = (3Z)-decenoyl-[ACP]. It participates in lipid metabolism; fatty acid biosynthesis. In terms of biological role, necessary for the introduction of cis unsaturation into fatty acids. Catalyzes the dehydration of (3R)-3-hydroxydecanoyl-ACP to E-(2)-decenoyl-ACP and then its isomerization to Z-(3)-decenoyl-ACP. Can catalyze the dehydratase reaction for beta-hydroxyacyl-ACPs with saturated chain lengths up to 16:0, being most active on intermediate chain length. The polypeptide is 3-hydroxydecanoyl-[acyl-carrier-protein] dehydratase (Saccharophagus degradans (strain 2-40 / ATCC 43961 / DSM 17024)).